The sequence spans 327 residues: DNA-directed RNA polymerase subunit alpha (327 aa).

Residues 1-233 form an alpha N-terminal domain (alpha-NTD) region; the sequence is MQNVLKSFLT…HQLAAFVDLK (233 aa). An alpha C-terminal domain (alpha-CTD) region spans residues 247 to 327; sequence VNPLLLRPVE…GWPPADLTDQ (81 aa).

The protein belongs to the RNA polymerase alpha chain family. In terms of assembly, homodimer. The RNAP catalytic core consists of 2 alpha, 1 beta, 1 beta' and 1 omega subunit. When a sigma factor is associated with the core the holoenzyme is formed, which can initiate transcription.

It carries out the reaction RNA(n) + a ribonucleoside 5'-triphosphate = RNA(n+1) + diphosphate. In terms of biological role, DNA-dependent RNA polymerase catalyzes the transcription of DNA into RNA using the four ribonucleoside triphosphates as substrates. This is DNA-directed RNA polymerase subunit alpha from Coxiella burnetii (strain CbuK_Q154) (Coxiella burnetii (strain Q154)).